Reading from the N-terminus, the 177-residue chain is Adenine phosphoribosyltransferase (177 aa).

It belongs to the purine/pyrimidine phosphoribosyltransferase family. Homodimer.

The protein resides in the cytoplasm. The enzyme catalyses AMP + diphosphate = 5-phospho-alpha-D-ribose 1-diphosphate + adenine. The protein operates within purine metabolism; AMP biosynthesis via salvage pathway; AMP from adenine: step 1/1. Functionally, catalyzes a salvage reaction resulting in the formation of AMP, that is energically less costly than de novo synthesis. This is Adenine phosphoribosyltransferase from Rhodococcus jostii (strain RHA1).